Here is a 604-residue protein sequence, read N- to C-terminus: MNKTKGFTKYKKMRYMPGLDGLRAIAVLGIIIYHLNKQWLTGGFLGVDTFFVISGYLITSLLLKEYDDTGIIKLKSFWIRRLKRLLPAVIVLLMVVGTATLLLKSDNIIRVKHDIIAAIFYVSNWWYIAKDVNYFEQFSFMPLKHLWSLAIEEQFYIFFPVILVTLLLTIKKRYKIGFIFWGVSIISLGLMMFIYSINGDHSRVYFGTDTRLQTLLLGVILAFLWPPFKLKNDPPKVVKYVIDSIGSLSFIVLILLFFIINDETNWIYDGGFYLISILTLFIIASVVHPSTWIAKIFSNPVLVFIGKRSYSLYLWHFAVISFVHSYYVDGQIPVYVYFIDISLTIIFAELSYRFIETPFRKEGIKALNWRPSYIPQFIRMAIVVTLLIPFMLILVGAFNKYGKDIIGEKANSFDTTIEDNYLMRIAPIDNIHIDGLVSEKKKESSDVYNNIKPLLIGDSVMVDIGESFKSSVPKSRIDGKVGRQLYQTLPLVKANYSQYKKSSDQVVLELGTNGDFTVKQLDDLLNQFGKAKIYLVNTRVPRIYEANVNRLLADAAKRKSNVTLIDWNKRSQGHSEYFAPDGVHLEYKGVLALKDEILKALKKK.

Transmembrane regions (helical) follow at residues 15–35 (YMPG…IYHL), 43–63 (GFLG…SLLL), 85–105 (LLPA…LLKS), 150–170 (AIEE…LLTI), 176–196 (IGFI…FIYS), 212–232 (LQTL…KLKN), 240–260 (YVID…FFII), 267–287 (IYDG…ASVV), 310–330 (YSLY…YVDG), 332–352 (IPVY…ELSY), and 377–397 (FIRM…LVGA). Active-site residues include Ser-459, Asp-581, and His-584.

It belongs to the acyltransferase 3 family.

The protein resides in the cell membrane. This Staphylococcus aureus (strain Mu50 / ATCC 700699) protein is Putative O-acetyltransferase SAV0974.